A 243-amino-acid chain; its full sequence is Vesicle-associated membrane protein-associated protein B (243 aa).

A2 carries the post-translational modification N-acetylalanine. At 2 to 218 the chain is on the cytoplasmic side; the sequence is AKVEQVLSLE…PASAMAGKEE (217 aa). The MSP domain maps to 7–124; it reads VLSLEPQHEL…MDSKLRCVFE (118 aa). S146 carries the phosphoserine modification. K147 is covalently cross-linked (Glycyl lysine isopeptide (Lys-Gly) (interchain with G-Cter in SUMO1)). T150 is modified (phosphothreonine). Phosphoserine occurs at positions 158, 159, and 160. The stretch at 161–196 forms a coiled coil; the sequence is LDDTEVKKVMEECKRLQSEVQRLREENKQFKEEDGL. A compositionally biased stretch (basic and acidic residues) spans 186–197; that stretch reads ENKQFKEEDGLR. The segment at 186–214 is disordered; sequence ENKQFKEEDGLRMRKTAQSNSPAPASAMA. Residue S206 is modified to Phosphoserine. Residues 219–239 traverse the membrane as a helical; Anchor for type IV membrane protein segment; the sequence is GLSTRLLALVVLFFIVGVIIG.

The protein belongs to the VAMP-associated protein (VAP) (TC 9.B.17) family. As to quaternary structure, homodimer, and heterodimer with VAPA. Interacts with VAMP1 and VAMP2. Interacts (via MSP domain) with ZFYVE27. Interacts with RMDN3. Interacts with KIF5A in a ZFYVE27-dependent manner. Interacts (via MSP domain) with STARD3 (via phospho-FFAT motif). Interacts with STARD3NL (via FFAT motif). Interacts with CERT1. Interacts with PLEKHA3 and SACM1L to form a ternary complex. Interacts with VPS13A (via FFAT motif). Interacts with RB1CC1 (via phosphorylated FFAT motif), MIGA2 (via phosphorylated FFAT motif), RMDN3 (via phosphorylated FFAT motif), OSBPL1A (via FFAT motif), KCNB1 (via phosphorylated FFAT motif) and KCNB2 (via phosphorylated FFAT motif). Interacts (via MSP domain) with WDR44 (via FFAT motif); the interactions connect the endoplasmic reticulum (ER) with the endosomal tubule.

The protein resides in the endoplasmic reticulum membrane. Functionally, endoplasmic reticulum (ER)-anchored protein that mediates the formation of contact sites between the ER and endosomes via interaction with FFAT motif-containing proteins such as STARD3 or WDR44. Interacts with STARD3 in a FFAT motif phosphorylation dependent manner. Via interaction with WDR44 participates in neosynthesized protein export. Participates in the endoplasmic reticulum unfolded protein response (UPR) by inducing ERN1/IRE1 activity. Involved in cellular calcium homeostasis regulation. This Bos taurus (Bovine) protein is Vesicle-associated membrane protein-associated protein B.